A 544-amino-acid chain; its full sequence is Methionine--tRNA ligase (544 aa).

A 'HIGH' region motif is present at residues 10–20 (PYANGSLHLGH). Residues Cys-141, Cys-144, Cys-153, and Cys-156 each contribute to the Zn(2+) site. The 'KMSKS' region signature appears at 329–333 (KLSTS). Thr-332 contacts ATP.

It belongs to the class-I aminoacyl-tRNA synthetase family. MetG type 1 subfamily. In terms of assembly, monomer. Requires Zn(2+) as cofactor.

It localises to the cytoplasm. The enzyme catalyses tRNA(Met) + L-methionine + ATP = L-methionyl-tRNA(Met) + AMP + diphosphate. In terms of biological role, is required not only for elongation of protein synthesis but also for the initiation of all mRNA translation through initiator tRNA(fMet) aminoacylation. The chain is Methionine--tRNA ligase from Bacillus mycoides (strain KBAB4) (Bacillus weihenstephanensis).